The primary structure comprises 305 residues: Protoheme IX farnesyltransferase (305 aa).

9 consecutive transmembrane segments (helical) span residues 31 to 51 (VMSL…YSVH), 52 to 72 (PFIA…AGAI), 102 to 119 (ALSF…FMAL), 123 to 145 (LLAS…IWLK), 151 to 171 (NIVI…AAVS), 179 to 199 (IILF…LALF), 218 to 238 (ILYT…VSLM), 240 to 260 (FFIG…GLVF), and 281 to 301 (FAYS…TSTI).

The protein belongs to the UbiA prenyltransferase family. Protoheme IX farnesyltransferase subfamily.

Its subcellular location is the cell inner membrane. It catalyses the reaction heme b + (2E,6E)-farnesyl diphosphate + H2O = Fe(II)-heme o + diphosphate. It participates in porphyrin-containing compound metabolism; heme O biosynthesis; heme O from protoheme: step 1/1. Converts heme B (protoheme IX) to heme O by substitution of the vinyl group on carbon 2 of heme B porphyrin ring with a hydroxyethyl farnesyl side group. The chain is Protoheme IX farnesyltransferase from Rickettsia akari (strain Hartford).